A 478-amino-acid polypeptide reads, in one-letter code: Flotillin-like protein 1 (478 aa).

A lipid anchor (S-palmitoyl cysteine) is attached at Cys35. Residues 235 to 277 (ENQREAEVAEANSELAKKKAAWTMAAQVAELEAAKAVALREAE) are a coiled coil.

The protein belongs to the band 7/mec-2 family. Flotillin subfamily. In terms of processing, may be palmitoylated. As to expression, expressed in all plant organs. Primarily expressed in vascular tissues. No change in spatial expression in root upon inoculation. Expression limited to the nodule vascular tissue.

It is found in the cell membrane. It localises to the membrane. Its subcellular location is the caveola. May act as a scaffolding protein within caveolar membranes, functionally participating in formation of caveolae or caveolae-like vesicles. May be involved in nodule formation. The chain is Flotillin-like protein 1 (FLOT1) from Medicago truncatula (Barrel medic).